A 488-amino-acid polypeptide reads, in one-letter code: Diacylglycerol O-acyltransferase 1 (488 aa).

Residues 1-57 (MGDRGSSRRRRTGSRPSSHGGGGPAAAEEEVRDAAAGPDVGAAGDAPAPAPNKDGDA) form a disordered region. Topologically, residues 1–83 (MGDRGSSRRR…SLFSSDSGFS (83 aa)) are cytoplasmic. The segment at 1–91 (MGDRGSSRRR…FSNYRGILNW (91 aa)) is involved in homomerization. 2 positions are modified to phosphoserine: serine 17 and serine 18. Low complexity predominate over residues 34 to 47 (AAAGPDVGAAGDAP). The helical transmembrane segment at 84–118 (NYRGILNWCVVMLILSNARLFLENLIKYGILVDPI) threads the bilayer. Residues 119 to 130 (QVVSLFLKDPYS) are Lumenal-facing. An extracellular loop 1 (EL1) region spans residues 119-130 (QVVSLFLKDPYS). Residues 131 to 156 (WPAPCLVIAANVFAVAAFQVEKRLAV) form a helical membrane-spanning segment. An MBOAT fold region spans residues 131–488 (WPAPCLVIAA…LNYEAPAAEA (358 aa)). Residues 157 to 161 (GALTE) are Cytoplasmic-facing. A helical membrane pass occupies residues 162–184 (QAGLLLHVANLATILCFPAAVVL). Residues 185–191 (LVESITP) lie on the Lumenal side of the membrane. Residues 192–223 (VGSLLALMAHTILFLKLFSYRDVNSWCRRARA) form a helical membrane-spanning segment. Topologically, residues 224-273 (KAASAGKKASSAAAPHTVSYPDNLTYRDLYYFLFAPTLCYELNFPRSPRI) are cytoplasmic. Residues 224-276 (KAASAGKKASSAAAPHTVSYPDNLTYRDLYYFLFAPTLCYELNFPRSPRIRKR) are intracellular loop 1 (IL1). A helical transmembrane segment spans residues 274–308 (RKRFLLRRILEMLFFTQLQVGLIQQWMVPTIQNSM). Topologically, residues 309-315 (KPFKDMD) are lumenal. The chain crosses the membrane as a helical span at residues 316–353 (YSRIIERLLKLAVPNHLIWLIFFYWLFHSCLNAVAELM). The Cytoplasmic portion of the chain corresponds to 354–399 (QFGDREFYRDWWNSESVTYFWQNWNIPVHKWCIRHFYKPMLRRGSS). Residues 354–399 (QFGDREFYRDWWNSESVTYFWQNWNIPVHKWCIRHFYKPMLRRGSS) form an intracellular loop 2 (IL2) region. The FYXDWWN motif motif lies at 360–366 (FYRDWWN). An acyl-CoA contacts are provided by residues 374–382 (WQNWNIPVH), tyrosine 390, and arginine 404. Residues 380–394 (PVHKWCIRHFYKPML) are amphipathic helix (AH). A helical transmembrane segment spans residues 400 to 420 (KWMARTGVFLASAFFHEYLVS). Residue histidine 415 is part of the active site. Topologically, residues 421–428 (VPLRMFRL) are lumenal. A helical transmembrane segment spans residues 429–447 (WAFTGMMAQIPLAWFVGRF). The Cytoplasmic segment spans residues 448–449 (FQ). Residues 450 to 481 (GNYGNAAVWLSLIIGQPIAVLMYVHDYYVLNY) traverse the membrane as a helical segment. Tyrosine 477 serves as a coordination point for an acyl-CoA. Residues 482–488 (EAPAAEA) lie on the Lumenal side of the membrane.

This sequence belongs to the membrane-bound acyltransferase family. Sterol o-acyltransferase subfamily. Homodimer or homotetramer; both forms have similar enzymatic activities.

The protein localises to the endoplasmic reticulum membrane. It catalyses the reaction an acyl-CoA + a 1,2-diacyl-sn-glycerol = a triacyl-sn-glycerol + CoA. It carries out the reaction all-trans-retinol + an acyl-CoA = an all-trans-retinyl ester + CoA. The catalysed reaction is 2-(9Z-octadecenoyl)-glycerol + (9Z)-octadecenoyl-CoA = 1,2-di-(9Z-octadecenoyl)-sn-glycerol + CoA. The enzyme catalyses 1,2-di-(9Z-octadecenoyl)-sn-glycerol + (9Z)-octadecenoyl-CoA = 1,2,3-tri-(9Z-octadecenoyl)-glycerol + CoA. It catalyses the reaction all-trans-retinol + hexadecanoyl-CoA = all-trans-retinyl hexadecanoate + CoA. It carries out the reaction 1-O-(9Z-octadecenyl)-glycerol + (9Z)-octadecenoyl-CoA = 1-O-(9Z-octadecyl)-3-(9Z-octadecenoyl)-glycerol + CoA. The catalysed reaction is 1-O-(9Z-octadecyl)-3-(9Z-octadecenoyl)-glycerol + (9Z)-octadecenoyl-CoA = 1-O-(9Z-octadecenyl)-2,3-di-(9Z-octadecenoyl)glycerol + CoA. The enzyme catalyses 1-(9Z-octadecenoyl)-glycerol + (9Z)-octadecenoyl-CoA = 1,2-di-(9Z-octadecenoyl)-glycerol + CoA. It catalyses the reaction 1,2-di-(9Z-octadecenoyl)-glycerol + (9Z)-octadecenoate + H(+) = 1,2,3-tri-(9Z-octadecenoyl)-glycerol + H2O. It carries out the reaction 1-octadecanoyl-2-(5Z,8Z,11Z,14Z-eicosatetraenoyl)-sn-glycerol + (9Z)-octadecenoyl-CoA = 1-octadecanoyl-2-(5Z,8Z,11Z,14Z)-eicosatetraenoyl-3-(9Z)-octadecenoyl-sn-glycerol + CoA. The catalysed reaction is hexadecane-1,2-diol + 2 hexadecanoyl-CoA = 1,2-O,O-dihexadecanoyl-1,2-hexadecanediol + 2 CoA. The enzyme catalyses hexadecane-1,2-diol + hexadecanoyl-CoA = 2-hydroxyhexadecyl hexadecanoate + CoA. It catalyses the reaction 2-(9Z-octadecenoyl)-glycerol + hexadecanoyl-CoA = 1-hexadecanoyl-2-(9Z-octadecenoyl)-sn-glycerol + CoA. It carries out the reaction 1,2-di-(9Z-octadecenoyl)-sn-glycerol + hexadecanoyl-CoA = 1,2-di-(9Z)-octadecenoyl-3-hexadecanoyl-sn-glycerol + CoA. The catalysed reaction is hexadecan-1-ol + hexadecanoyl-CoA = hexadecanyl hexadecanoate + CoA. The enzyme catalyses 13-cis-retinol + hexadecanoyl-CoA = 13-cis-retinyl hexadecanoate + CoA. It catalyses the reaction 1,3-di-(9Z-octadecenoyl)-glycerol + (9Z)-octadecenoyl-CoA = 1,2,3-tri-(9Z-octadecenoyl)-glycerol + CoA. It carries out the reaction 2,3-di-(9Z)-octadecenoyl-sn-glycerol + (9Z)-octadecenoyl-CoA = 1,2,3-tri-(9Z-octadecenoyl)-glycerol + CoA. It participates in lipid metabolism; glycerolipid metabolism. With respect to regulation, XP620 is a selective DGAT1 inhibitor. Its function is as follows. Catalyzes the terminal and only committed step in triacylglycerol synthesis by using diacylglycerol and fatty acyl CoA as substrates. Highly expressed in epithelial cells of the small intestine and its activity is essential for the absorption of dietary fats. In liver, plays a role in esterifying exogenous fatty acids to glycerol, and is required to synthesize fat for storage. Also present in female mammary glands, where it produces fat in the milk. May be involved in VLDL (very low density lipoprotein) assembly. In contrast to DGAT2 it is not essential for survival. Functions as the major acyl-CoA retinol acyltransferase (ARAT) in the skin, where it acts to maintain retinoid homeostasis and prevent retinoid toxicity leading to skin and hair disorders. Exhibits additional acyltransferase activities, includin acyl CoA:monoacylglycerol acyltransferase (MGAT), wax monoester and wax diester synthases. Also able to use 1-monoalkylglycerol (1-MAkG) as an acyl acceptor for the synthesis of monoalkyl-monoacylglycerol (MAMAG). This is Diacylglycerol O-acyltransferase 1 from Homo sapiens (Human).